A 549-amino-acid polypeptide reads, in one-letter code: Zinc finger protein 266 (549 aa).

The 42-residue stretch at 1-42 (MLENYKNLATVGYQLFKPSLISWLEQEESRTVQRGDFQASEW) folds into the KRAB domain. The C2H2-type 1; degenerate zinc-finger motif lies at 156–178 (FDCSDSGKSFINHSHLQGHLRTH). The segment at 184-206 (HEWKECGRGFIHSTDLAVRIQTH) adopts a C2H2-type 2; degenerate zinc-finger fold. 12 C2H2-type zinc fingers span residues 212 to 234 (YKCKECGKGFRYSAYLNIHMGTH), 240 to 262 (YECKECGKAFTRSCQLTQHRKTH), 268 to 290 (YKCKDCGRAFTVSSCLSQHMKIH), 296 to 318 (YECKECGIAFTRSSQLTEHLKTH), 324 to 346 (FECKICGKSFRNSSCLSDHFRIH), 352 to 374 (YKCKDCGKAFTQNSDLTKHARTH), 380 to 402 (YECKECGKAFARSSRLSEHTRTH), 408 to 430 (FECVKCGKAFAISSNLSGHLRIH), 436 to 458 (FECLECGKAFTHSSSLNNHMRTH), 464 to 486 (FTCMECGKAFKFPTCVNLHMRIH), 492 to 514 (YKCKQCGKSFSYSNSFQLHERTH), and 520 to 542 (YECKECGKAFSSSSSFRNHERRH). Positions 530–549 (SSSSSFRNHERRHADERLSA) are disordered.

Belongs to the krueppel C2H2-type zinc-finger protein family.

It is found in the nucleus. Its function is as follows. May be involved in transcriptional regulation. The protein is Zinc finger protein 266 (ZNF266) of Homo sapiens (Human).